A 162-amino-acid chain; its full sequence is Shikimate kinase (162 aa).

10–15 serves as a coordination point for ATP; that stretch reads GAGKST. Ser14 serves as a coordination point for Mg(2+). Substrate-binding residues include Asp28, Arg52, and Gly73. Arg113 serves as a coordination point for ATP. A substrate-binding site is contributed by Arg129.

Belongs to the shikimate kinase family. As to quaternary structure, monomer. Mg(2+) is required as a cofactor.

The protein localises to the cytoplasm. It catalyses the reaction shikimate + ATP = 3-phosphoshikimate + ADP + H(+). Its pathway is metabolic intermediate biosynthesis; chorismate biosynthesis; chorismate from D-erythrose 4-phosphate and phosphoenolpyruvate: step 5/7. Functionally, catalyzes the specific phosphorylation of the 3-hydroxyl group of shikimic acid using ATP as a cosubstrate. In Lactococcus lactis subsp. lactis (strain IL1403) (Streptococcus lactis), this protein is Shikimate kinase.